A 107-amino-acid polypeptide reads, in one-letter code: Quaternary ammonium compound-resistance protein QacC (107 aa).

Transmembrane regions (helical) follow at residues 26–46 (FSKF…FYFL), 57–77 (ITYA…SIII), and 84–104 (LITI…NIFG).

The protein belongs to the drug/metabolite transporter (DMT) superfamily. Small multidrug resistance (SMR) (TC 2.A.7.1) family.

It is found in the cell membrane. Multidrug exporter. Is implicated for the resistance to bacteriocidal quaternary ammonium compounds. The sequence is that of Quaternary ammonium compound-resistance protein QacC from Staphylococcus sp. (strain ST827).